Here is a 430-residue protein sequence, read N- to C-terminus: Phosphomethylpyrimidine synthase 2 (430 aa).

Residues N66, M95, Y124, H164, S186 to G188, D227 to R230, and E266 contribute to the substrate site. H270 lines the Zn(2+) pocket. Y293 contributes to the substrate binding site. H334 contributes to the Zn(2+) binding site. Residues C411, C414, and C418 each coordinate [4Fe-4S] cluster.

Belongs to the ThiC family. Homodimer. It depends on [4Fe-4S] cluster as a cofactor.

The catalysed reaction is 5-amino-1-(5-phospho-beta-D-ribosyl)imidazole + S-adenosyl-L-methionine = 4-amino-2-methyl-5-(phosphooxymethyl)pyrimidine + CO + 5'-deoxyadenosine + formate + L-methionine + 3 H(+). It functions in the pathway cofactor biosynthesis; thiamine diphosphate biosynthesis. Its function is as follows. Catalyzes the synthesis of the hydroxymethylpyrimidine phosphate (HMP-P) moiety of thiamine from aminoimidazole ribotide (AIR) in a radical S-adenosyl-L-methionine (SAM)-dependent reaction. This is Phosphomethylpyrimidine synthase 2 from Syntrophotalea carbinolica (strain DSM 2380 / NBRC 103641 / GraBd1) (Pelobacter carbinolicus).